The primary structure comprises 284 residues: Tripartite motif-containing protein 12A (284 aa).

The segment at 15–59 (CPVCLNLMVKPVSADCGHTFCQGCITLYFESIKCDKKVFICPVCR) adopts an RING-type zinc-finger fold. The B box-type zinc finger occupies 91 to 132 (QKVFNCARHGKKLQLFCRKDMMAICWLCERSQEHRGHKTALI). Zn(2+) contacts are provided by cysteine 96, histidine 99, cysteine 118, and histidine 124. Residues 130 to 234 (ALIEEVAQEY…QSKLLEDFIS (105 aa)) are a coiled coil.

The protein belongs to the TRIM/RBCC family. In terms of tissue distribution, expressed in embryonic CNS, liver, kidney, olfactory epithelium.

Its subcellular location is the cytoplasm. The polypeptide is Tripartite motif-containing protein 12A (Trim12a) (Mus musculus (Mouse)).